Reading from the N-terminus, the 959-residue chain is MTSPFLQRHVGPSDSEQQQMLSALGYADMAAFLADVVPEDILDEFPPQGLLPPGCGEAEALVHLREIAAANNSRRSLIGLGYYGTSTPALIQRHVFENPAWYTAYTPYQAEIAQGRLEALLNFQTLISELTGLPIANASLLDEATAAAEAMSLSYGICRRTEANRFLVDANVLPQTWAVLQTRAEPLGIDLERVTPEQASFDASVFGVLLQLPGADGQIWDPTAVIARAHEAGALVTVAIDPLAQALIAPVASFGADIAVGSAQRFGVPMGFGGPHAAFFATKDTYKRQIPGRLVGQSRDSAGNPALRLALQTREQHIRRDKATSNICTAQVLLAVMASFYAVHHGPEGLMSIARRIVGQRRQLERALQSLGFVVPDGERFDTVTVTSALAPAVHQAVGEAGFNLRVLPDGANPAESTGFGIALDECTTADELSRLVAALATAAGQTSPSLPLAPVEELCGVPERVDPWLSQSVFHDHLSETELMRYIQRLVSRDLSLVHGMIPLGSCTMKLNAAAELLPVSWPAFAGLHPFAPMAQAAGYQRLAEQLEAWLAALTGFAAVSLQPNAGSQGEYAGLLVIRAWHRSRGDDHRDVCLIPTSAHGTNPASAVMAGLKVVAVACDADGNIDQQDLAARAAEHADRLAALMVTYPSTHGVFETGIRGICELVHRHGGQVYLDGANLNAQVGLCRPGAFGADVCHLNLHKTFCIPHGGGGPGVGPIGVADHLAPFLPGHPMQASPDQAIGPVSAAALGSASILPISWMYLRMMGAEALRQATAVALLSANYLALRLDPHYPVLFRGATGRVAHECILDLRPLKRDAGIDVDDIAKRLMDYGFHAPTVSWPVAGTVMVEPTESESLAELDRFADAMIAIRNEIRDIESGAMDASNNPLKQAPHTMAAVIAEDWDRPYSRQQAAFPLPDQQQNKVWPAVARIDNAYGDRNLICTCPSVEEIAVAVAA.

K704 is modified (N6-(pyridoxal phosphate)lysine).

Belongs to the GcvP family. The glycine cleavage system is composed of four proteins: P, T, L and H. Pyridoxal 5'-phosphate is required as a cofactor.

The catalysed reaction is N(6)-[(R)-lipoyl]-L-lysyl-[glycine-cleavage complex H protein] + glycine + H(+) = N(6)-[(R)-S(8)-aminomethyldihydrolipoyl]-L-lysyl-[glycine-cleavage complex H protein] + CO2. The glycine cleavage system catalyzes the degradation of glycine. The P protein binds the alpha-amino group of glycine through its pyridoxal phosphate cofactor; CO(2) is released and the remaining methylamine moiety is then transferred to the lipoamide cofactor of the H protein. This chain is Glycine dehydrogenase (decarboxylating), found in Parasynechococcus marenigrum (strain WH8102).